Consider the following 58-residue polypeptide: ATP synthase F(0) complex subunit k, mitochondrial (58 aa).

Lys-16 and Lys-17 each carry N6-acetyllysine. A helical membrane pass occupies residues 23–45 (TLTGRMNCVLATYGGIALLVLYF).

In terms of assembly, component of the ATP synthase complex composed at least of ATP5F1A/subunit alpha, ATP5F1B/subunit beta, ATP5MC1/subunit c (homooctomer), MT-ATP6/subunit a, MT-ATP8/subunit 8, ATP5ME/subunit e, ATP5MF/subunit f, ATP5MG/subunit g, ATP5MK/subunit k, ATP5MJ/subunit j, ATP5F1C/subunit gamma, ATP5F1D/subunit delta, ATP5F1E/subunit epsilon, ATP5PF/subunit F6, ATP5PB/subunit b, ATP5PD/subunit d, ATP5PO/subunit OSCP. ATP synthase complex consists of a soluble F(1) head domain (subunits alpha(3) and beta(3)) - the catalytic core - and a membrane F(0) domain - the membrane proton channel (subunits c, a, 8, e, f, g, k and j). These two domains are linked by a central stalk (subunits gamma, delta, and epsilon) rotating inside the F1 region and a stationary peripheral stalk (subunits F6, b, d, and OSCP). The ATP synthase complex/complex V exists as a monomeric and a dimeric supercomplex that helps shape mitochondrial cristae to optimize proton flow. In terms of tissue distribution, ubiquitous. Highly expressed in skeletal and cardiac muscle. Moderately expressed in brain, thymus, stomach and testis. Lowest expression levels were detected in lung, liver, kidney, adrenal gland, spleen, small intestine and adipose tissue. In streptozotocin-induced diabetes, the insulin-sensitive tissues skeletal and cardiac muscle were down-regulated.

It localises to the mitochondrion membrane. Functionally, subunit k, of the mitochondrial membrane ATP synthase complex (F(1)F(0) ATP synthase or Complex V) that produces ATP from ADP in the presence of a proton gradient across the membrane which is generated by electron transport complexes of the respiratory chain. ATP synthase complex consist of a soluble F(1) head domain - the catalytic core - and a membrane F(1) domain - the membrane proton channel. These two domains are linked by a central stalk rotating inside the F(1) region and a stationary peripheral stalk. During catalysis, ATP synthesis in the catalytic domain of F(1) is coupled via a rotary mechanism of the central stalk subunits to proton translocation. In vivo, can only synthesize ATP although its ATP hydrolase activity can be activated artificially in vitro. Part of the complex F(0) domain. Required for dimerization of the ATP synthase complex and as such regulates ATP synthesis in the mitochondria. The sequence is that of ATP synthase F(0) complex subunit k, mitochondrial (Atp5mk) from Rattus norvegicus (Rat).